An 816-amino-acid chain; its full sequence is Phosphatidylinositol 4-kinase beta (816 aa).

The disordered stretch occupies residues 1–30; it reads MGDTVVEPAPLKPTSEPTSGPPGNNGGSLL. Glycine 2 is subject to N-acetylglycine. A PIK helical domain is found at 29-242; that stretch reads LLSVITEGVG…GTKLRKLILS (214 aa). The interval 41-67 is interaction with ACBD3; that stretch reads SVIDPEVAQKACQEVLEKVKLLHGGVA. Disordered stretches follow at residues 101 to 120 and 248 to 318; these read EDEM…RRRR and AHRK…SFSS. Residue serine 258 is modified to Phosphoserine. Position 263 is a phosphothreonine (threonine 263). 5 positions are modified to phosphoserine: serine 266, serine 275, serine 277, serine 284, and serine 294. 2 stretches are compositionally biased toward polar residues: residues 278–297 and 306–318; these read DATA…SNPK and SSST…SFSS. Position 428 is a phosphoserine (serine 428). At threonine 438 the chain carries Phosphothreonine. The residue at position 511 (serine 511) is a Phosphoserine. Residues threonine 517 and threonine 519 each carry the phosphothreonine modification. One can recognise a PI3K/PI4K catalytic domain in the interval 535-801; that stretch reads EPWQEKVRRI…MVDGSMRSIT (267 aa). Residues 541-547 are G-loop; that stretch reads VRRIREG. The tract at residues 668-676 is catalytic loop; the sequence is QVKDRHNGN. Residues 687 to 711 are activation loop; sequence HIDFGFILSSSPRNLGFETSAFKLT.

Belongs to the PI3/PI4-kinase family. Type III PI4K subfamily. In terms of assembly, interacts with ARF1 and ARF3 in the Golgi complex, but not with ARF4, ARF5 or ARF6. Interacts with NCS1/FREQ in a calcium-independent manner. Interacts with CALN1/CABP8 and CALN2/CABP7; in a calcium-dependent manner; this interaction competes with NCS1/FREQ binding. Interacts with ACBD3. Interacts with ARMH3, YWHAB, YWHAE, YWHAG, YWHAH, YWHAQ, YWHAZ and SFN. Interacts with GGA2 (via VHS domain); the interaction is important for PI4KB location at the Golgi apparatus membrane. Interacts with ATG9A. (Microbial infection) Interacts with Aichi virus protein 3A. Part of a complex Aichi virus protein 3A/ACBD3/PI4KB that allows the synthesis of PI4P at the viral RNA replication sites. The cofactor is Mg(2+). Mn(2+) serves as cofactor. As to expression, widely expressed with highest levels in heart, skeletal muscle, pancreas, testis and ovary. Weakly expressed in liver. Expressed in the innear ear in the epithelium of the spinal organ of corti.

It localises to the endomembrane system. It is found in the mitochondrion outer membrane. The protein resides in the rough endoplasmic reticulum membrane. The protein localises to the golgi apparatus. Its subcellular location is the golgi apparatus membrane. It localises to the cytoplasm. It is found in the perinuclear region. The catalysed reaction is a 1,2-diacyl-sn-glycero-3-phospho-(1D-myo-inositol) + ATP = a 1,2-diacyl-sn-glycero-3-phospho-(1D-myo-inositol 4-phosphate) + ADP + H(+). Inhibited by wortmannin and adenosine. Increased kinase activity upon interaction with NCS1/FREQ. With respect to regulation, (Microbial infection) Activated by Aichi virus protein 3A, this activation is sensitized by ACBD3. Functionally, phosphorylates phosphatidylinositol (PI) in the first committed step in the production of the second messenger inositol-1,4,5,-trisphosphate (PIP). May regulate Golgi disintegration/reorganization during mitosis, possibly via its phosphorylation. Involved in Golgi-to-plasma membrane trafficking. May play an important role in the inner ear development. (Microbial infection) Plays an essential role in Aichi virus RNA replication. Recruited by ACBD3 at the viral replication sites. In terms of biological role, (Microbial infection) Required for cellular spike-mediated entry of human coronavirus SARS-CoV. This is Phosphatidylinositol 4-kinase beta from Homo sapiens (Human).